The primary structure comprises 284 residues: Pantothenate synthetase (284 aa).

30–37 (MGNLHDGH) contacts ATP. The active-site Proton donor is the His37. Residue Gln61 coordinates (R)-pantoate. Gln61 contributes to the beta-alanine binding site. ATP is bound at residue 149–152 (GEKD). Gln155 is a binding site for (R)-pantoate. ATP contacts are provided by residues Ile178 and 186-189 (LSSR).

It belongs to the pantothenate synthetase family. In terms of assembly, homodimer.

The protein resides in the cytoplasm. It catalyses the reaction (R)-pantoate + beta-alanine + ATP = (R)-pantothenate + AMP + diphosphate + H(+). It functions in the pathway cofactor biosynthesis; (R)-pantothenate biosynthesis; (R)-pantothenate from (R)-pantoate and beta-alanine: step 1/1. In terms of biological role, catalyzes the condensation of pantoate with beta-alanine in an ATP-dependent reaction via a pantoyl-adenylate intermediate. This chain is Pantothenate synthetase, found in Salmonella newport (strain SL254).